The primary structure comprises 315 residues: Acetyl-coenzyme A carboxylase carboxyl transferase subunit alpha (315 aa).

In terms of domain architecture, CoA carboxyltransferase C-terminal spans 36–289 (LSKKRLELME…RKAVAAELKI (254 aa)).

This sequence belongs to the AccA family. As to quaternary structure, acetyl-CoA carboxylase is a heterohexamer composed of biotin carboxyl carrier protein (AccB), biotin carboxylase (AccC) and two subunits each of ACCase subunit alpha (AccA) and ACCase subunit beta (AccD).

The protein resides in the cytoplasm. It carries out the reaction N(6)-carboxybiotinyl-L-lysyl-[protein] + acetyl-CoA = N(6)-biotinyl-L-lysyl-[protein] + malonyl-CoA. The protein operates within lipid metabolism; malonyl-CoA biosynthesis; malonyl-CoA from acetyl-CoA: step 1/1. Its function is as follows. Component of the acetyl coenzyme A carboxylase (ACC) complex. First, biotin carboxylase catalyzes the carboxylation of biotin on its carrier protein (BCCP) and then the CO(2) group is transferred by the carboxyltransferase to acetyl-CoA to form malonyl-CoA. The chain is Acetyl-coenzyme A carboxylase carboxyl transferase subunit alpha from Francisella tularensis subsp. tularensis (strain FSC 198).